The chain runs to 483 residues: Betaine aldehyde dehydrogenase (483 aa).

Positions 27 and 93 each coordinate K(+). Residue 149 to 151 participates in NAD(+) binding; that stretch reads GAW. Lys161 serves as the catalytic Charge relay system. 175 to 178 lines the NAD(+) pocket; it reads KPSE. A K(+)-binding site is contributed by Val179. 228–231 provides a ligand contact to NAD(+); the sequence is SVPT. Val243 lines the K(+) pocket. Catalysis depends on Glu249, which acts as the Proton acceptor. The NAD(+) site is built by Gly251, Cys283, and Glu380. The active-site Nucleophile is the Cys283. The residue at position 283 (Cys283) is a Cysteine sulfenic acid (-SOH). K(+) contacts are provided by Lys450 and Gly453. Catalysis depends on Glu457, which acts as the Charge relay system.

It belongs to the aldehyde dehydrogenase family. As to quaternary structure, dimer of dimers. Requires K(+) as cofactor.

The enzyme catalyses betaine aldehyde + NAD(+) + H2O = glycine betaine + NADH + 2 H(+). The protein operates within amine and polyamine biosynthesis; betaine biosynthesis via choline pathway; betaine from betaine aldehyde: step 1/1. In terms of biological role, involved in the biosynthesis of the osmoprotectant glycine betaine. Catalyzes the irreversible oxidation of betaine aldehyde to the corresponding acid. This is Betaine aldehyde dehydrogenase from Cereibacter sphaeroides (strain ATCC 17023 / DSM 158 / JCM 6121 / CCUG 31486 / LMG 2827 / NBRC 12203 / NCIMB 8253 / ATH 2.4.1.) (Rhodobacter sphaeroides).